We begin with the raw amino-acid sequence, 191 residues long: MKLPESFYETIFLFLESGLILGSLGVILLTNIVYSALFLGFVFVCISLLYLLLNADFVAAAQILIYVGAVNVLIIFAVMLINKKQYSNFFVYWTIGDGITLTLCTSIFLLLNNFISNTSWSKIFLMTKPNLVVKDIILINTVRHIGSELLTEFLLPFELMSIILLVALIGAITLARREKKIELEKNDFFNF.

A run of 5 helical transmembrane segments spans residues 10-30, 32-52, 61-81, 89-109, and 153-173; these read TIFLFLESGLILGSLGVILLT, IVYSALFLGFVFVCISLLYLL, AQILIYVGAVNVLIIFAVMLI, FFVYWTIGDGITLTLCTSIFL, and FLLPFELMSIILLVALIGAIT.

The protein belongs to the complex I subunit 6 family. As to quaternary structure, NDH is composed of at least 16 different subunits, 5 of which are encoded in the nucleus.

The protein localises to the plastid. The protein resides in the chloroplast thylakoid membrane. The catalysed reaction is a plastoquinone + NADH + (n+1) H(+)(in) = a plastoquinol + NAD(+) + n H(+)(out). It carries out the reaction a plastoquinone + NADPH + (n+1) H(+)(in) = a plastoquinol + NADP(+) + n H(+)(out). Functionally, NDH shuttles electrons from NAD(P)H:plastoquinone, via FMN and iron-sulfur (Fe-S) centers, to quinones in the photosynthetic chain and possibly in a chloroplast respiratory chain. The immediate electron acceptor for the enzyme in this species is believed to be plastoquinone. Couples the redox reaction to proton translocation, and thus conserves the redox energy in a proton gradient. The polypeptide is NAD(P)H-quinone oxidoreductase subunit 6, chloroplastic (ndhG) (Marchantia polymorpha (Common liverwort)).